Here is a 280-residue protein sequence, read N- to C-terminus: Ribosomal RNA small subunit methyltransferase A (280 aa).

The S-adenosyl-L-methionine site is built by Leu-24, Gly-49, Glu-70, Asp-95, and Asn-118.

It belongs to the class I-like SAM-binding methyltransferase superfamily. rRNA adenine N(6)-methyltransferase family. RsmA subfamily.

It localises to the cytoplasm. The catalysed reaction is adenosine(1518)/adenosine(1519) in 16S rRNA + 4 S-adenosyl-L-methionine = N(6)-dimethyladenosine(1518)/N(6)-dimethyladenosine(1519) in 16S rRNA + 4 S-adenosyl-L-homocysteine + 4 H(+). Its function is as follows. Specifically dimethylates two adjacent adenosines (A1518 and A1519) in the loop of a conserved hairpin near the 3'-end of 16S rRNA in the 30S particle. May play a critical role in biogenesis of 30S subunits. In Syntrophus aciditrophicus (strain SB), this protein is Ribosomal RNA small subunit methyltransferase A.